A 688-amino-acid chain; its full sequence is PTS system glucoside-specific EIICBA component (688 aa).

The 425-residue stretch at 3-427 folds into the PTS EIIC type-1 domain; it reads KKLFGQLQRI…FKLKTPGRED (425 aa). Transmembrane regions (helical) follow at residues 12 to 32, 81 to 101, 137 to 157, 182 to 202, 223 to 243, 284 to 304, 315 to 335, 340 to 360, 364 to 384, and 395 to 415; these read IGKALMLPVAILPAAGILLAF, LGLAGGDGVAALAALVGYLIM, LVLGIPTLQTGVFGGIIMGAL, FVPIVTSVVAIATGVLLSFAW, LTTFIFGIIERSLIPFGLHHI, AFTTGKYPFMMFGLPAAAFAI, VVGGLMLSAGLTAFLTGITEP, FLFVAPVLYGIHVLLAGTSFL, LLGVKIGMTFSGGFIDYILYG, and LVIPVGIVYAIVYYFLFDFAI. A PTS EIIB type-1 domain is found at 438-519; the sequence is AKLPFDVLDA…AKIMSGEITK (82 aa). C460 (phosphocysteine intermediate; for EIIB activity) is an active-site residue. Residues 560–664 form the PTS EIIA type-1 domain; the sequence is DQVFAGKMMG…SIVTPMIITN (105 aa). H612 (tele-phosphohistidine intermediate; for EIIA activity) is an active-site residue.

It localises to the cell membrane. In terms of biological role, the phosphoenolpyruvate-dependent sugar phosphotransferase system (sugar PTS), a major carbohydrate active -transport system, catalyzes the phosphorylation of incoming sugar substrates concomitantly with their translocation across the cell membrane. This system is involved in alpha- and beta-glucoside transport. This chain is PTS system glucoside-specific EIICBA component (glcB), found in Staphylococcus aureus (strain USA300).